The chain runs to 344 residues: Cytochrome c biogenesis protein CcsA (344 aa).

Transmembrane regions (helical) follow at residues 21–41 (NVAF…AAFP), 45–65 (LLSE…AALL), 80–100 (LYES…LALH), 106–126 (WVGV…ALAL), 151–171 (VMLL…AFLI), 252–272 (LIGL…VWAN), 287–307 (WALI…TKGW), and 313–333 (ALLA…VNFL).

Belongs to the CcmF/CycK/Ccl1/NrfE/CcsA family. As to quaternary structure, may interact with ccs1.

The protein resides in the cellular thylakoid membrane. Required during biogenesis of c-type cytochromes (cytochrome c6 and cytochrome f) at the step of heme attachment. In Synechococcus sp. (strain JA-3-3Ab) (Cyanobacteria bacterium Yellowstone A-Prime), this protein is Cytochrome c biogenesis protein CcsA.